Consider the following 697-residue polypeptide: Elongation factor G 2 (697 aa).

A tr-type G domain is found at 5–280 (SKYRNIGIFA…AVVDYLPAPD (276 aa)). GTP-binding positions include 14–21 (AHVDAGKT), 78–82 (DTPGH), and 132–135 (NKLD).

It belongs to the TRAFAC class translation factor GTPase superfamily. Classic translation factor GTPase family. EF-G/EF-2 subfamily.

It is found in the cytoplasm. Catalyzes the GTP-dependent ribosomal translocation step during translation elongation. During this step, the ribosome changes from the pre-translocational (PRE) to the post-translocational (POST) state as the newly formed A-site-bound peptidyl-tRNA and P-site-bound deacylated tRNA move to the P and E sites, respectively. Catalyzes the coordinated movement of the two tRNA molecules, the mRNA and conformational changes in the ribosome. The protein is Elongation factor G 2 (fusB) of Shewanella oneidensis (strain ATCC 700550 / JCM 31522 / CIP 106686 / LMG 19005 / NCIMB 14063 / MR-1).